A 214-amino-acid chain; its full sequence is Phosphatidylserine decarboxylase proenzyme (214 aa).

S182 acts as the Schiff-base intermediate with substrate; via pyruvic acid in catalysis. Position 182 is a pyruvic acid (Ser); by autocatalysis (S182).

The protein belongs to the phosphatidylserine decarboxylase family. PSD-A subfamily. In terms of assembly, heterodimer of a large membrane-associated beta subunit and a small pyruvoyl-containing alpha subunit. The cofactor is pyruvate. In terms of processing, is synthesized initially as an inactive proenzyme. Formation of the active enzyme involves a self-maturation process in which the active site pyruvoyl group is generated from an internal serine residue via an autocatalytic post-translational modification. Two non-identical subunits are generated from the proenzyme in this reaction, and the pyruvate is formed at the N-terminus of the alpha chain, which is derived from the carboxyl end of the proenzyme. The post-translation cleavage follows an unusual pathway, termed non-hydrolytic serinolysis, in which the side chain hydroxyl group of the serine supplies its oxygen atom to form the C-terminus of the beta chain, while the remainder of the serine residue undergoes an oxidative deamination to produce ammonia and the pyruvoyl prosthetic group on the alpha chain.

The protein localises to the cell membrane. The catalysed reaction is a 1,2-diacyl-sn-glycero-3-phospho-L-serine + H(+) = a 1,2-diacyl-sn-glycero-3-phosphoethanolamine + CO2. It functions in the pathway phospholipid metabolism; phosphatidylethanolamine biosynthesis; phosphatidylethanolamine from CDP-diacylglycerol: step 2/2. Functionally, catalyzes the formation of phosphatidylethanolamine (PtdEtn) from phosphatidylserine (PtdSer). This Burkholderia lata (strain ATCC 17760 / DSM 23089 / LMG 22485 / NCIMB 9086 / R18194 / 383) protein is Phosphatidylserine decarboxylase proenzyme.